The primary structure comprises 377 residues: 3-dehydroquinate synthase (377 aa).

NAD(+) is bound by residues 115 to 119 (GVIGD), 139 to 140 (TS), K152, and K161. The Zn(2+) site is built by E194, H256, and H275.

Belongs to the sugar phosphate cyclases superfamily. Dehydroquinate synthase family. Requires Co(2+) as cofactor. Zn(2+) is required as a cofactor. NAD(+) serves as cofactor.

It is found in the cytoplasm. The catalysed reaction is 7-phospho-2-dehydro-3-deoxy-D-arabino-heptonate = 3-dehydroquinate + phosphate. Its pathway is metabolic intermediate biosynthesis; chorismate biosynthesis; chorismate from D-erythrose 4-phosphate and phosphoenolpyruvate: step 2/7. In terms of biological role, catalyzes the conversion of 3-deoxy-D-arabino-heptulosonate 7-phosphate (DAHP) to dehydroquinate (DHQ). This is 3-dehydroquinate synthase from Rhizobium rhizogenes (strain K84 / ATCC BAA-868) (Agrobacterium radiobacter).